A 474-amino-acid chain; its full sequence is Protein IFIT1 homolog B (474 aa).

TPR repeat units follow at residues 52 to 85 (VGIH…IQKE), 95 to 128 (LVTW…CKKF), 141 to 174 (VDCE…NPEN), 182 to 216 (AITV…NPDD), 218 to 250 (YIRV…ISSQ), 251 to 284 (AYVF…TPTS), 305 to 339 (ATNW…KRTF), 340 to 373 (EMAY…KIFE), 378 to 412 (QEIH…EKMS), and 437 to 470 (VESV…AADL).

The protein belongs to the IFIT family.

In terms of biological role, IFIT1B is likely non-functional, lacking the critical antiviral role of IFIT1. Unlike IFIT1, which is essential in the innate immune response as part of an interferon-dependent multiprotein complex, IFIT1B does not prevent the translation of viral RNAs that lack host-specific 2'-O-methylation at their 5' cap. Consequently, it probably cannot inhibit their translation by competing with the host translation machinery. This Homo sapiens (Human) protein is Protein IFIT1 homolog B.